The sequence spans 289 residues: Poly-beta-1,6-N-acetyl-D-glucosamine N-deacetylase (289 aa).

Residues 1–30 form the signal peptide; it reads MKPFKLIFISALMILIMTNATPISHLNAQA. Positions 113 to 289 constitute a NodB homology domain; the sequence is RSVWINFDDM…KEWDGFDEEK (177 aa).

The protein belongs to the polysaccharide deacetylase family.

The protein localises to the secreted. Its subcellular location is the cell wall. Functionally, catalyzes the N-deacetylation of poly-beta-1,6-N-acetyl-D-glucosamine (PNAG, also referred to as PIA), a biofilm adhesin polysaccharide. In fact, the IcaB deacetylase converts 15 to 20% of the GlcNAc residues of PNAG to glucosamine. N-deacetylation is crucial for attachment of the polysaccharide to the bacterial cell surface; it leads to the introduction of positive charges in the otherwise neutral PIA polymer, allowing electrostatic interactions. Deacetylation of the polymer is also essential for key virulence mechanisms of S.epidermidis, namely biofilm formation, colonization, and resistance to neutrophil phagocytosis and human antibacterial peptides. This chain is Poly-beta-1,6-N-acetyl-D-glucosamine N-deacetylase (icaB), found in Staphylococcus epidermidis (strain ATCC 35984 / DSM 28319 / BCRC 17069 / CCUG 31568 / BM 3577 / RP62A).